The sequence spans 221 residues: Deoxyribose-phosphate aldolase (221 aa).

Residue Asp90 is the Proton donor/acceptor of the active site. Residue Lys152 is the Schiff-base intermediate with acetaldehyde of the active site. Catalysis depends on Lys181, which acts as the Proton donor/acceptor.

This sequence belongs to the DeoC/FbaB aldolase family. DeoC type 1 subfamily.

The protein resides in the cytoplasm. The enzyme catalyses 2-deoxy-D-ribose 5-phosphate = D-glyceraldehyde 3-phosphate + acetaldehyde. It participates in carbohydrate degradation; 2-deoxy-D-ribose 1-phosphate degradation; D-glyceraldehyde 3-phosphate and acetaldehyde from 2-deoxy-alpha-D-ribose 1-phosphate: step 2/2. Catalyzes a reversible aldol reaction between acetaldehyde and D-glyceraldehyde 3-phosphate to generate 2-deoxy-D-ribose 5-phosphate. The polypeptide is Deoxyribose-phosphate aldolase (Syntrophotalea carbinolica (strain DSM 2380 / NBRC 103641 / GraBd1) (Pelobacter carbinolicus)).